Reading from the N-terminus, the 137-residue chain is uncharacterized protein (137 aa).

4 helical membrane passes run 20-39 (YGKIGVATAMAVGAAVGYAV), 44-61 (WFITVIAVLAGVALLSLV), 86-105 (VEIFSIGAALSGAVMLALDL), and 109-131 (AALALEFAVCCVLVLYLIFYGYY).

It is found in the cell membrane. This is an uncharacterized protein from Archaeoglobus fulgidus (strain ATCC 49558 / DSM 4304 / JCM 9628 / NBRC 100126 / VC-16).